Reading from the N-terminus, the 130-residue chain is Large ribosomal subunit protein bL12 (130 aa).

Positions 94-114 (MTEGLPKTVKEKTSKSDAEDT) are disordered.

Belongs to the bacterial ribosomal protein bL12 family. In terms of assembly, homodimer. Part of the ribosomal stalk of the 50S ribosomal subunit. Forms a multimeric L10(L12)X complex, where L10 forms an elongated spine to which 2 to 4 L12 dimers bind in a sequential fashion. Binds GTP-bound translation factors.

Functionally, forms part of the ribosomal stalk which helps the ribosome interact with GTP-bound translation factors. Is thus essential for accurate translation. The chain is Large ribosomal subunit protein bL12 from Chlamydia caviae (strain ATCC VR-813 / DSM 19441 / 03DC25 / GPIC) (Chlamydophila caviae).